The sequence spans 462 residues: GTPase Der (462 aa).

EngA-type G domains lie at 3 to 166 (PVIA…TTET) and 175 to 348 (IKIA…HSAI). Residues 9–16 (GRPNVGKS), 56–60 (DTGGI), 118–121 (NKTD), 181–188 (GRPNVGKS), 228–232 (DTAGV), and 293–296 (NKWD) each bind GTP. In terms of domain architecture, KH-like spans 349–433 (QSFSTPKLTR…PLKIEFKGGQ (85 aa)).

The protein belongs to the TRAFAC class TrmE-Era-EngA-EngB-Septin-like GTPase superfamily. EngA (Der) GTPase family. In terms of assembly, associates with the 50S ribosomal subunit.

Its function is as follows. GTPase that plays an essential role in the late steps of ribosome biogenesis. This is GTPase Der from Legionella pneumophila (strain Paris).